Consider the following 281-residue polypeptide: Ribosomal RNA small subunit methyltransferase A (281 aa).

The S-adenosyl-L-methionine site is built by histidine 25, leucine 27, glycine 52, glutamate 74, aspartate 100, and asparagine 119.

It belongs to the class I-like SAM-binding methyltransferase superfamily. rRNA adenine N(6)-methyltransferase family. RsmA subfamily.

The protein resides in the cytoplasm. It carries out the reaction adenosine(1518)/adenosine(1519) in 16S rRNA + 4 S-adenosyl-L-methionine = N(6)-dimethyladenosine(1518)/N(6)-dimethyladenosine(1519) in 16S rRNA + 4 S-adenosyl-L-homocysteine + 4 H(+). Functionally, specifically dimethylates two adjacent adenosines (A1518 and A1519) in the loop of a conserved hairpin near the 3'-end of 16S rRNA in the 30S particle. May play a critical role in biogenesis of 30S subunits. This is Ribosomal RNA small subunit methyltransferase A from Paramagnetospirillum magneticum (strain ATCC 700264 / AMB-1) (Magnetospirillum magneticum).